The following is a 607-amino-acid chain: Inactive metallocarboxypeptidase ECM14 (607 aa).

A signal peptide spans Met1–Ala21. The propeptide occupies Ile22–Pro174. The 321-residue stretch at Asn202 to Leu522 folds into the Peptidase M14 domain. His264 and Glu267 together coordinate Zn(2+). Residues His264 to Glu267, Arg322, and Asp339 to Arg340 contribute to the substrate site. A disulfide bridge links Cys333 with Cys356. A glycan (N-linked (GlcNAc...) asparagine) is linked at Asn349. His396 provides a ligand contact to Zn(2+). Ser397–Tyr398 provides a ligand contact to substrate. The segment at Gln539 to Arg607 is disordered. Positions Asn550–Asp571 are enriched in acidic residues. A compositionally biased stretch (basic and acidic residues) spans Gly573–Asn590.

It belongs to the peptidase M14 family. Zn(2+) serves as cofactor.

It is found in the vacuole. It localises to the secreted. In terms of biological role, inactive carboxypeptidase that may play a role in cell wall organization and biogenesis. In Ajellomyces capsulatus (strain NAm1 / WU24) (Darling's disease fungus), this protein is Inactive metallocarboxypeptidase ECM14 (ECM14).